The sequence spans 446 residues: Cytochrome P450 monooxygenase ATR14 (446 aa).

Positions 403 to 446 are disordered; that stretch reads NFTYPDEFRPDRWLDDRDQKEYEHDHGDAMQPFSVGPRDCPSQK. Positions 408–430 are enriched in basic and acidic residues; it reads DEFRPDRWLDDRDQKEYEHDHGD. Cysteine 442 is a binding site for heme.

Belongs to the cytochrome P450 family. The cofactor is heme.

It functions in the pathway mycotoxin biosynthesis. In terms of biological role, cytochrome P450 monooxygenase; part of the core atranone cluster (CAC) which products are predicted to catalyze most or all steps of mycotoxin atranone synthesis, starting from geranylgeranyl pyrophosphate (GGPP). The initial cyclization of GGPP to dolabellane is probably performed by the terpene cyclase ATR13. The Baeyer-Villiger oxidation near the end of the atranone synthesis, which converts atranones D and E to atranones F and G is predicted to be catalyzed by the monooxygenase ATR8. Of the CAC's other predicted gene products, the reducing PKS ATR6 might synthesize a polyketide chain. This polyketide is probably transferred onto the atranone backbone by the polyketide transferase ATR5. Other predicted CAC products include 4 oxygenases (ATR2, ATR3, ATR4, and ATR14), 3 short-chain reductases (ATR7, ATR9, and ATR10), and a methyltransferase (ATR12). These may all be involved in the various steps of atranone biosynthesis, although their specific roles must await experimental determination. This is Cytochrome P450 monooxygenase ATR14 from Stachybotrys chlorohalonatus (strain IBT 40285).